The primary structure comprises 709 residues: Ribosomal RNA large subunit methyltransferase K/L (709 aa).

Positions 43–154 (LAYRITLWTR…NGVITIAMNF (112 aa)) constitute a THUMP domain.

It belongs to the methyltransferase superfamily. RlmKL family.

The protein localises to the cytoplasm. The enzyme catalyses guanosine(2445) in 23S rRNA + S-adenosyl-L-methionine = N(2)-methylguanosine(2445) in 23S rRNA + S-adenosyl-L-homocysteine + H(+). The catalysed reaction is guanosine(2069) in 23S rRNA + S-adenosyl-L-methionine = N(2)-methylguanosine(2069) in 23S rRNA + S-adenosyl-L-homocysteine + H(+). In terms of biological role, specifically methylates the guanine in position 2445 (m2G2445) and the guanine in position 2069 (m7G2069) of 23S rRNA. In Shewanella sp. (strain W3-18-1), this protein is Ribosomal RNA large subunit methyltransferase K/L.